Here is a 1252-residue protein sequence, read N- to C-terminus: MSRTASYAGMTTPVKDKEGHGIPCLQPIDVVECTYQYFTKSQNKLSLRVGDLIYVLTKGSNGWWDGVLIRHSANNNNNSLILDRGWFPPSFTRSILNELHGVPEIGNELEIFQAGLNLKLELSSNPVILSLEDFLDCCRDIEFKEQLAWSPIPVHERKGCCELLYYNQDLDVYCRTLPYLPQNQVETVNDYSSFPAISKIAGKKMPITSSPDLFYLNDCDVVYWYDLTRLVCHYVNLTERDLLANEREKFLTSLDLLTAQITCVYMLFRNLRLVEDSFKKTLKKLIYTLSRFSINANIWFHSTPFEEREAIASQKDPERRSPLLQSILGTFQKFHFLLRLLHFLSNPNELTILPQLTPRFFKDSFNTISWNNPFLRKHLNQHMSHDLPRQMIKAVAGASGIVAENNDEIPASKQGTSCSSETSHHSPSAPFQRRRRGTIFSNVPGSSDESDTIWSKRKKPYPLNEETLSLVRARKEQLDAKLKQMIKSANEYLSNTANFSKMLNFEMNFKTYEEVSGTIPIIDILENLDLTIYLNLRELGDENRVFDEDVAIDDEDKEFLKHSLSSLSYILSDYFNMKQYFHDVVVKFIIVAQHLTLEDPFVFSPMQNDLPTGYYEPMKPSSLNLDNAKDKKNGSQNTDIQEEEDEYEPDPDSLILFHNLINQDSDFNDLKFFNLAHVFKKSCDDYFDVLKLSIEFVNRLILERENLLNYAARMMKNNITELLLRGEEGYGSYDGGETAEKSDTNAVYADSDTKDNDEWRDSQVKLPRYLQREYDSELIWGSNNRIKGGSKHALISYLTDNEKKDLFFNITFLITFRSIFTTTEFLSYLISQYNLDPPEDLCFEEYNEWVTKKLIPVKCRVVEIMTTFFKQYWFPGYDEPDLATLNLDYFAQVAIKENITGSVELLKEVNQKFKHGNMQEATAPMKTLDQQICQEHYWGTLYSTTESILAVDPVLFATQLTILEHEIYCEITIFDCLQKIWKNKYTKSYGASPGLNEFISFANKLTNFISYSIVKEADKSKRAKLLSHFIFIAEYCRKFNNFSSMTAIISALYSSSIYRLEKTWQAVIPQTRDLLQSLDKLMDPKKNFINYRSELKSLHSAPCVPFFGVYLSDLTFTDSGNPDYLVLEHGLKGVHDEKKYINFNKRSRLVDILQEIIYFKKTHYDFTKDRTVIECISNSLENIPHIEKQYQLSLIIEPKPRKKVVPNSNSNNKSQEKSRDDQTDEGKTSTKKDRFSKFQLHKTKKKAPKVSK.

The SH3 domain occupies Gln26–Asn97. 2 disordered regions span residues Ile409–Trp454 and Leu623–Glu648. Over residues Thr416–Ser428 the composition is skewed to low complexity. Residues Ser782 to Lys914 enclose the N-terminal Ras-GEF domain. The Ras-GEF domain occupies Asp952–Lys1199. Residues Arg1201–Lys1252 form a disordered region. Basic and acidic residues predominate over residues Ser1214–Ser1236. Residues Gln1239–Lys1252 are compositionally biased toward basic residues.

Its function is as follows. Promotes the exchange of Ras-bound GDP by GTP. This is Guanine nucleotide exchange factor SDC25 (SDC25) from Saccharomyces cerevisiae (strain RM11-1a) (Baker's yeast).